A 170-amino-acid chain; its full sequence is dCTP pyrophosphatase 1 (170 aa).

The disordered stretch occupies residues 1 to 27 (MSVAGGEIRGDTGGEDTAAPGRFSFSP). An N-acetylserine modification is found at serine 2. Position 2 is a phosphoserine (serine 2). Threonine 12 carries the post-translational modification Phosphothreonine. Residues histidine 38 and 47-51 (WEQFH) each bind substrate. Mg(2+)-binding residues include glutamate 63 and glutamate 66. Tryptophan 73 lines the substrate pocket. Serine 85 is modified (phosphoserine). 2 residues coordinate Mg(2+): glutamate 95 and aspartate 98. Residue tyrosine 102 participates in substrate binding. Residues 147-170 (GAISEDQAVGPADIPCDSTGQTST) form a disordered region.

In terms of assembly, homotetramer. It depends on Mg(2+) as a cofactor.

It localises to the mitochondrion. Its subcellular location is the nucleus. It is found in the cytoplasm. The protein resides in the cytosol. The enzyme catalyses dCTP + H2O = dCMP + diphosphate + H(+). With respect to regulation, inhibited by the reaction end product PPi. Inhibited by dCDP. Inhibited by triptolide. In terms of biological role, hydrolyzes deoxynucleoside triphosphates (dNTPs) to the corresponding nucleoside monophosphates. Has a strong preference for dCTP and its analogs including 5-iodo-dCTP and 5-methyl-dCTP for which it may even have a higher efficiency. May protect DNA or RNA against the incorporation of these genotoxic nucleotide analogs through their catabolism. This Homo sapiens (Human) protein is dCTP pyrophosphatase 1.